The sequence spans 142 residues: Hemoglobin subunit alpha (142 aa).

An N-acetylserine modification is found at S1. The region spanning 1–142 (SLSDKDKAAV…VALALAERYR (142 aa)) is the Globin domain. Residue H59 coordinates O2. H88 lines the heme b pocket.

Belongs to the globin family. Heterotetramer of two alpha chains and two beta chains. Red blood cells.

Its function is as follows. Involved in oxygen transport from gills to the various peripheral tissues. The protein is Hemoglobin subunit alpha (hba) of Gymnodraco acuticeps (Antarctic dragonfish).